The sequence spans 278 residues: Pantothenate synthetase (278 aa).

Residue 27-34 participates in ATP binding; that stretch reads MGNLHEGH. The active-site Proton donor is His-34. Gln-58 contributes to the (R)-pantoate binding site. Gln-58 contributes to the beta-alanine binding site. Residue 147 to 150 participates in ATP binding; it reads GEKD. Gln-153 contributes to the (R)-pantoate binding site. Position 184–187 (184–187) interacts with ATP; that stretch reads YSSR.

This sequence belongs to the pantothenate synthetase family. In terms of assembly, homodimer.

The protein localises to the cytoplasm. The enzyme catalyses (R)-pantoate + beta-alanine + ATP = (R)-pantothenate + AMP + diphosphate + H(+). It functions in the pathway cofactor biosynthesis; (R)-pantothenate biosynthesis; (R)-pantothenate from (R)-pantoate and beta-alanine: step 1/1. In terms of biological role, catalyzes the condensation of pantoate with beta-alanine in an ATP-dependent reaction via a pantoyl-adenylate intermediate. The chain is Pantothenate synthetase from Acidithiobacillus ferrooxidans (strain ATCC 23270 / DSM 14882 / CIP 104768 / NCIMB 8455) (Ferrobacillus ferrooxidans (strain ATCC 23270)).